Consider the following 645-residue polypeptide: DNA ligase (645 aa).

NAD(+) is bound by residues 30 to 34, 79 to 80, and E106; these read DIEYD and SM. K108 functions as the N6-AMP-lysine intermediate in the catalytic mechanism. R129, E163, and K302 together coordinate NAD(+). Zn(2+) contacts are provided by C396, C399, C412, and C417. In terms of domain architecture, BRCT spans 570 to 645; sequence ISQNVFTKKT…ISEDEFKEML (76 aa).

Belongs to the NAD-dependent DNA ligase family. LigA subfamily. Mg(2+) serves as cofactor. It depends on Mn(2+) as a cofactor.

The catalysed reaction is NAD(+) + (deoxyribonucleotide)n-3'-hydroxyl + 5'-phospho-(deoxyribonucleotide)m = (deoxyribonucleotide)n+m + AMP + beta-nicotinamide D-nucleotide.. In terms of biological role, DNA ligase that catalyzes the formation of phosphodiester linkages between 5'-phosphoryl and 3'-hydroxyl groups in double-stranded DNA using NAD as a coenzyme and as the energy source for the reaction. It is essential for DNA replication and repair of damaged DNA. The chain is DNA ligase from Campylobacter hominis (strain ATCC BAA-381 / DSM 21671 / CCUG 45161 / LMG 19568 / NCTC 13146 / CH001A).